A 184-amino-acid chain; its full sequence is ATP synthase subunit delta (184 aa).

The protein belongs to the ATPase delta chain family. In terms of assembly, F-type ATPases have 2 components, F(1) - the catalytic core - and F(0) - the membrane proton channel. F(1) has five subunits: alpha(3), beta(3), gamma(1), delta(1), epsilon(1). CF(0) has four main subunits: a(1), b(1), b'(1) and c(10-14). The alpha and beta chains form an alternating ring which encloses part of the gamma chain. F(1) is attached to F(0) by a central stalk formed by the gamma and epsilon chains, while a peripheral stalk is formed by the delta, b and b' chains.

It localises to the cellular thylakoid membrane. Its function is as follows. F(1)F(0) ATP synthase produces ATP from ADP in the presence of a proton or sodium gradient. F-type ATPases consist of two structural domains, F(1) containing the extramembraneous catalytic core and F(0) containing the membrane proton channel, linked together by a central stalk and a peripheral stalk. During catalysis, ATP synthesis in the catalytic domain of F(1) is coupled via a rotary mechanism of the central stalk subunits to proton translocation. Functionally, this protein is part of the stalk that links CF(0) to CF(1). It either transmits conformational changes from CF(0) to CF(1) or is implicated in proton conduction. The sequence is that of ATP synthase subunit delta from Nostoc punctiforme (strain ATCC 29133 / PCC 73102).